We begin with the raw amino-acid sequence, 111 residues long: Large ribosomal subunit protein uL22 (111 aa).

Belongs to the universal ribosomal protein uL22 family. Part of the 50S ribosomal subunit.

In terms of biological role, this protein binds specifically to 23S rRNA; its binding is stimulated by other ribosomal proteins, e.g. L4, L17, and L20. It is important during the early stages of 50S assembly. It makes multiple contacts with different domains of the 23S rRNA in the assembled 50S subunit and ribosome. Functionally, the globular domain of the protein is located near the polypeptide exit tunnel on the outside of the subunit, while an extended beta-hairpin is found that lines the wall of the exit tunnel in the center of the 70S ribosome. The protein is Large ribosomal subunit protein uL22 of Mycoplasma mycoides subsp. mycoides SC (strain CCUG 32753 / NCTC 10114 / PG1).